The sequence spans 106 residues: UPF0145 protein Cthe_0398 (106 aa).

It belongs to the UPF0145 family.

The polypeptide is UPF0145 protein Cthe_0398 (Acetivibrio thermocellus (strain ATCC 27405 / DSM 1237 / JCM 9322 / NBRC 103400 / NCIMB 10682 / NRRL B-4536 / VPI 7372) (Clostridium thermocellum)).